The sequence spans 297 residues: N-acetylmuramic acid 6-phosphate etherase (297 aa).

Residues 55 to 218 (ATDALKSGGR…STGAMVKFGK (164 aa)) form the SIS domain. Residue glutamate 83 is the Proton donor of the active site. Residue glutamate 114 is part of the active site.

Belongs to the GCKR-like family. MurNAc-6-P etherase subfamily. Homodimer.

The catalysed reaction is N-acetyl-D-muramate 6-phosphate + H2O = N-acetyl-D-glucosamine 6-phosphate + (R)-lactate. The protein operates within amino-sugar metabolism; 1,6-anhydro-N-acetylmuramate degradation. It participates in amino-sugar metabolism; N-acetylmuramate degradation. Its pathway is cell wall biogenesis; peptidoglycan recycling. Specifically catalyzes the cleavage of the D-lactyl ether substituent of MurNAc 6-phosphate, producing GlcNAc 6-phosphate and D-lactate. Together with AnmK, is also required for the utilization of anhydro-N-acetylmuramic acid (anhMurNAc) either imported from the medium or derived from its own cell wall murein, and thus plays a role in cell wall recycling. The polypeptide is N-acetylmuramic acid 6-phosphate etherase (Enterobacter sp. (strain 638)).